We begin with the raw amino-acid sequence, 336 residues long: MIEFVIPKKLKVEEEREEKDYYYARFSLSPLERGYAITIGNALRRVLLSSIPSLAIVGVRFIKPEKYHEYDYIEGVKEDILDIILNLKKVQFRVNVTVKGTIKMEVEKKGPGELVAGDIKTPAGIEVANPDLHIATLNSKADLFFEVYAEVGKGFVPVSEREERPDVGWIPIDGVFSPVIKVNFLTENVRVGKRTDYDKLILEIWTKKSIRPEEALRKAADILINHFKIVTEGLPELKISEEYIITSEEEEAEIPAVDHEEENRENLDVYNRKIDELELSVRSLNCLKRAKIETIGDLLSKTEEELLKIKNFGQKSLDEVKEKLKEKFGLELRKGE.

An alpha N-terminal domain (alpha-NTD) region spans residues 1 to 234 (MIEFVIPKKL…NHFKIVTEGL (234 aa)). Positions 269–336 (VYNRKIDELE…KFGLELRKGE (68 aa)) are alpha C-terminal domain (alpha-CTD).

It belongs to the RNA polymerase alpha chain family. In terms of assembly, homodimer. The RNAP catalytic core consists of 2 alpha, 1 beta, 1 beta' and 1 omega subunit. When a sigma factor is associated with the core the holoenzyme is formed, which can initiate transcription.

It carries out the reaction RNA(n) + a ribonucleoside 5'-triphosphate = RNA(n+1) + diphosphate. Its function is as follows. DNA-dependent RNA polymerase catalyzes the transcription of DNA into RNA using the four ribonucleoside triphosphates as substrates. The polypeptide is DNA-directed RNA polymerase subunit alpha (Thermotoga petrophila (strain ATCC BAA-488 / DSM 13995 / JCM 10881 / RKU-1)).